The sequence spans 125 residues: Large ribosomal subunit protein bL19 (125 aa).

It belongs to the bacterial ribosomal protein bL19 family.

Functionally, this protein is located at the 30S-50S ribosomal subunit interface and may play a role in the structure and function of the aminoacyl-tRNA binding site. The polypeptide is Large ribosomal subunit protein bL19 (Synechococcus sp. (strain JA-2-3B'a(2-13)) (Cyanobacteria bacterium Yellowstone B-Prime)).